A 1229-amino-acid chain; its full sequence is Putative cell division cycle ATPase (1229 aa).

A compositionally biased stretch (low complexity) spans G252–V267. A disordered region spans residues G252 to E315. Basic and acidic residues predominate over residues P268–N281. A compositionally biased stretch (low complexity) spans N282–N314. G568–T575 serves as a coordination point for ATP. Disordered stretches follow at residues T814–D837 and F860–R892. Composition is skewed to basic and acidic residues over residues D819–D837 and N882–R892. Residue G975–T982 coordinates ATP.

Belongs to the AAA ATPase family.

This Plasmodium falciparum (isolate 3D7) protein is Putative cell division cycle ATPase.